The primary structure comprises 397 residues: Glutamate 5-kinase (397 aa).

The disordered stretch occupies residues 1–28 (MVADLTSDISESQEQETETNSANNNGAV). Residue Lys-40 coordinates ATP. Substrate contacts are provided by Ser-80, Asp-168, and Asn-180. Residues 200-201 (SD) and 243-249 (SGGMASK) contribute to the ATP site. One can recognise a PUA domain in the interval 306–383 (HGQVYIDQGA…QEIADILGYE (78 aa)).

It belongs to the glutamate 5-kinase family.

The protein localises to the cytoplasm. The catalysed reaction is L-glutamate + ATP = L-glutamyl 5-phosphate + ADP. It participates in amino-acid biosynthesis; L-proline biosynthesis; L-glutamate 5-semialdehyde from L-glutamate: step 1/2. In terms of biological role, catalyzes the transfer of a phosphate group to glutamate to form L-glutamate 5-phosphate. This is Glutamate 5-kinase from Zymomonas mobilis subsp. mobilis (strain ATCC 31821 / ZM4 / CP4).